The sequence spans 1368 residues: DNA-directed RNA polymerase subunit beta (1368 aa).

This sequence belongs to the RNA polymerase beta chain family. The RNAP catalytic core consists of 2 alpha, 1 beta, 1 beta' and 1 omega subunit. When a sigma factor is associated with the core the holoenzyme is formed, which can initiate transcription.

It catalyses the reaction RNA(n) + a ribonucleoside 5'-triphosphate = RNA(n+1) + diphosphate. Its function is as follows. DNA-dependent RNA polymerase catalyzes the transcription of DNA into RNA using the four ribonucleoside triphosphates as substrates. In Cupriavidus taiwanensis (strain DSM 17343 / BCRC 17206 / CCUG 44338 / CIP 107171 / LMG 19424 / R1) (Ralstonia taiwanensis (strain LMG 19424)), this protein is DNA-directed RNA polymerase subunit beta.